The following is a 106-amino-acid chain: Ribonuclease P protein component 4 (106 aa).

Residues cysteine 63, cysteine 66, cysteine 89, and cysteine 92 each contribute to the Zn(2+) site.

It belongs to the eukaryotic/archaeal RNase P protein component 4 family. Consists of a catalytic RNA component and at least 4-5 protein subunits. It depends on Zn(2+) as a cofactor.

Its subcellular location is the cytoplasm. It carries out the reaction Endonucleolytic cleavage of RNA, removing 5'-extranucleotides from tRNA precursor.. Functionally, part of ribonuclease P, a protein complex that generates mature tRNA molecules by cleaving their 5'-ends. The polypeptide is Ribonuclease P protein component 4 (Methanosphaerula palustris (strain ATCC BAA-1556 / DSM 19958 / E1-9c)).